The following is a 573-amino-acid chain: Protein FAM200A (573 aa).

Positions 1–51 (MTPESRDTTDLSPGGTQEMEGIVIVKVEEEDEEDHFQKERNKVESSPQVLS) are disordered. Over 1 to 513 (MTPESRDTTD…DDFPLLSRKS (513 aa)) the chain is Extracellular. The helical transmembrane segment at 514–533 (ILLLLPFTTTYLCELGFSIL) threads the bilayer. Residues 534-573 (TRLKTKKRNRLNSAPDMRVALSSCVPDWKELMNRQAHPSH) lie on the Cytoplasmic side of the membrane.

The protein belongs to the FAM200 family.

The protein localises to the membrane. This Homo sapiens (Human) protein is Protein FAM200A (FAM200A).